An 810-amino-acid polypeptide reads, in one-letter code: Actin-regulating kinase PRK1 (810 aa).

The region spanning 22–298 (AKIIKYLTSG…CQVLEEVSRL (277 aa)) is the Protein kinase domain. Residues 28 to 36 (LTSGGFAQV) and lysine 56 contribute to the ATP site. Catalysis depends on aspartate 158, which acts as the Proton acceptor. Serine 402, serine 428, and serine 484 each carry phosphoserine. Disordered regions lie at residues 552 to 668 (FTGN…NVNI) and 733 to 761 (GVLDIKTKSNGKDKSRPPRPPPKPLHLRT). Threonine 553 is modified (phosphothreonine). Positions 553-566 (TGNSVNNSRSASFD) are enriched in polar residues. Phosphoserine is present on serine 556. The segment covering 567-588 (NNNVNGNGNNTNRRLVSSSTSS) has biased composition (low complexity). 2 stretches are compositionally biased toward basic and acidic residues: residues 594–612 (SDTKRKEESDKNQRLEKRR) and 622–639 (FDQHERNNSRTGSRDYYR). Low complexity predominate over residues 645–658 (KKTQASAKTTSKPT). The span at 733 to 748 (GVLDIKTKSNGKDKSR) shows a compositional bias: basic and acidic residues. Positions 743–756 (GKDKSRPPRPPPKP) are interaction with SH3 domain of ABP1.

This sequence belongs to the protein kinase superfamily. Ser/Thr protein kinase family. In terms of assembly, interacts with ABP1, which is required for proper actin patch localization.

It is found in the cytoplasm. The protein localises to the cytoskeleton. The protein resides in the actin patch. The catalysed reaction is L-seryl-[protein] + ATP = O-phospho-L-seryl-[protein] + ADP + H(+). It catalyses the reaction L-threonyl-[protein] + ATP = O-phospho-L-threonyl-[protein] + ADP + H(+). In terms of biological role, protein kinase involved in the regulation of actin cytoskeleton organization and endocytosis. Phosphorylates PAN1 which disrupts the interaction between PAN1 and END3, and between PAN1 and SLA1. Phosphorylates SCD5. Preferentially, phosphorylates substrates on threonine residues in a [L/I/V/M]-x-x-[Q/N/T/S]-x-T-G motif. The chain is Actin-regulating kinase PRK1 (PRK1) from Saccharomyces cerevisiae (strain ATCC 204508 / S288c) (Baker's yeast).